The following is a 295-amino-acid chain: Mycothiol acetyltransferase (295 aa).

N-acetyltransferase domains lie at 5–141 and 149–295; these read VEIR…TPLP and VRLR…MYRR. 1D-myo-inositol 2-(L-cysteinylamino)-2-deoxy-alpha-D-glucopyranoside is bound at residue Glu35. An acetyl-CoA-binding site is contributed by 76–78; the sequence is LVV. Positions 176, 215, and 229 each coordinate 1D-myo-inositol 2-(L-cysteinylamino)-2-deoxy-alpha-D-glucopyranoside. Residues 233–235 and 240–246 contribute to the acetyl-CoA site; these read VGV and RGTGLGR. Tyr267 is a binding site for 1D-myo-inositol 2-(L-cysteinylamino)-2-deoxy-alpha-D-glucopyranoside. 272–277 is an acetyl-CoA binding site; the sequence is NTAAVR.

This sequence belongs to the acetyltransferase family. MshD subfamily. As to quaternary structure, monomer.

It carries out the reaction 1D-myo-inositol 2-(L-cysteinylamino)-2-deoxy-alpha-D-glucopyranoside + acetyl-CoA = mycothiol + CoA + H(+). Functionally, catalyzes the transfer of acetyl from acetyl-CoA to desacetylmycothiol (Cys-GlcN-Ins) to form mycothiol. The sequence is that of Mycothiol acetyltransferase from Thermobispora bispora (strain ATCC 19993 / DSM 43833 / CBS 139.67 / JCM 10125 / KCTC 9307 / NBRC 14880 / R51).